The sequence spans 123 residues: Ribosome-binding factor A (123 aa).

Belongs to the RbfA family. Monomer. Binds 30S ribosomal subunits, but not 50S ribosomal subunits or 70S ribosomes.

The protein resides in the cytoplasm. Functionally, one of several proteins that assist in the late maturation steps of the functional core of the 30S ribosomal subunit. Associates with free 30S ribosomal subunits (but not with 30S subunits that are part of 70S ribosomes or polysomes). Required for efficient processing of 16S rRNA. May interact with the 5'-terminal helix region of 16S rRNA. The chain is Ribosome-binding factor A from Chlamydia trachomatis serovar A (strain ATCC VR-571B / DSM 19440 / HAR-13).